Reading from the N-terminus, the 137-residue chain is Nucleoside diphosphate kinase (137 aa).

Positions 9, 57, 85, 91, 102, and 112 each coordinate ATP. The Pros-phosphohistidine intermediate role is filled by His-115.

Belongs to the NDK family. Homotetramer. It depends on Mg(2+) as a cofactor.

It localises to the cytoplasm. It catalyses the reaction a 2'-deoxyribonucleoside 5'-diphosphate + ATP = a 2'-deoxyribonucleoside 5'-triphosphate + ADP. It carries out the reaction a ribonucleoside 5'-diphosphate + ATP = a ribonucleoside 5'-triphosphate + ADP. Its function is as follows. Major role in the synthesis of nucleoside triphosphates other than ATP. The ATP gamma phosphate is transferred to the NDP beta phosphate via a ping-pong mechanism, using a phosphorylated active-site intermediate. The protein is Nucleoside diphosphate kinase of Campylobacter hominis (strain ATCC BAA-381 / DSM 21671 / CCUG 45161 / LMG 19568 / NCTC 13146 / CH001A).